The following is a 426-amino-acid chain: Glutamate-1-semialdehyde 2,1-aminomutase (426 aa).

At Lys-265 the chain carries N6-(pyridoxal phosphate)lysine.

Belongs to the class-III pyridoxal-phosphate-dependent aminotransferase family. HemL subfamily. In terms of assembly, homodimer. Pyridoxal 5'-phosphate serves as cofactor.

It is found in the cytoplasm. It catalyses the reaction (S)-4-amino-5-oxopentanoate = 5-aminolevulinate. Its pathway is porphyrin-containing compound metabolism; protoporphyrin-IX biosynthesis; 5-aminolevulinate from L-glutamyl-tRNA(Glu): step 2/2. In Hydrogenovibrio crunogenus (strain DSM 25203 / XCL-2) (Thiomicrospira crunogena), this protein is Glutamate-1-semialdehyde 2,1-aminomutase.